The primary structure comprises 269 residues: uncharacterized protein (269 aa).

Residues 12 to 19 (GKGGTGKS) and 130 to 137 (GYLIVGKS) contribute to the ATP site.

This sequence to M.jannaschii MJ0578.

This is an uncharacterized protein from Methanocaldococcus jannaschii (strain ATCC 43067 / DSM 2661 / JAL-1 / JCM 10045 / NBRC 100440) (Methanococcus jannaschii).